An 85-amino-acid chain; its full sequence is Conotoxin Lt28.4 (85 aa).

A signal peptide spans 1-21 (MPKLEMMLLVLLILPLCYIDA). The propeptide occupies 22–40 (VGPPPPWNMEDEIIEHWQK).

The protein belongs to the conotoxin D superfamily. Post-translationally, contains 5 disulfide bonds. Expressed by the venom duct.

The protein localises to the secreted. Its function is as follows. Probable neurotoxin. This Conus litteratus (Lettered cone) protein is Conotoxin Lt28.4.